The following is a 446-amino-acid chain: Coagulation factor VII (446 aa).

The first 24 residues, 1–24 (MVPQAHGLLLLCFLLQLQGPLGTA), serve as a signal peptide directing secretion. The propeptide occupies 25–41 (VFITQEEAHGVLHRQRR). Residues 42 to 86 (ANSLLEELWPGSLERECNEEQCSFEEAREIFKSPERTKQFWIVYS) form the Gla domain. 4-carboxyglutamate occurs at positions 47, 48, 55, 57, 60, 61, 66, 67, 70, and 76. A disulfide bridge connects residues Cys-58 and Cys-63. Residues 87-123 (DGDQCASNPCQNGGTCQDHLKSYVCFCLLDFEGRNCE) enclose the EGF-like 1; calcium-binding domain. Intrachain disulfides connect Cys-91–Cys-102, Cys-96–Cys-111, Cys-113–Cys-122, Cys-132–Cys-143, Cys-139–Cys-153, Cys-155–Cys-168, Cys-176–Cys-303, Cys-200–Cys-205, Cys-219–Cys-235, and Cys-351–Cys-370. The O-linked (Glc...) serine; alternate glycan is linked to Ser-93. Ser-93 is a glycosylation site (O-linked (Xyl...) serine; alternate). Asp-104 bears the (3R)-3-hydroxyaspartate mark. One can recognise an EGF-like 2 domain in the interval 128-169 (EQLICANENGDCDQYCRDHVGTKRTCSCHEDYTLQPDEVSCK). Asn-186 is a glycosylation site (N-linked (GlcNAc...) asparagine). Residues 194–433 (IVGGNVCPKG…YIDWLVRHMD (240 aa)) form the Peptidase S1 domain. The active-site Charge relay system is His-234. N-linked (GlcNAc...) asparagine glycosylation occurs at Asn-244. The Charge relay system role is filled by Asp-283. Position 379 (Asp-379) interacts with substrate. A disulfide bridge links Cys-381 with Cys-409. The active-site Charge relay system is Ser-385.

Belongs to the peptidase S1 family. Heterodimer of a light chain and a heavy chain linked by a disulfide bond. Post-translationally, the vitamin K-dependent, enzymatic carboxylation of some glutamate residues allows the modified protein to bind calcium. The iron and 2-oxoglutarate dependent 3-hydroxylation of aspartate and asparagine is (R) stereospecific within EGF domains. In terms of processing, can be either O-glucosylated or O-xylosylated at Ser-93 by POGLUT1. In terms of tissue distribution, plasma and liver.

The protein resides in the secreted. It catalyses the reaction Selective cleavage of Arg-|-Ile bond in factor X to form factor Xa.. Its function is as follows. Initiates the extrinsic pathway of blood coagulation. Serine protease that circulates in the blood in a zymogen form. Factor VII is converted to factor VIIa by factor Xa, factor XIIa, factor IXa, or thrombin by minor proteolysis. In the presence of tissue factor and calcium ions, factor VIIa then converts factor X to factor Xa by limited proteolysis. Factor VIIa also converts factor IX to factor IXa in the presence of tissue factor and calcium. The protein is Coagulation factor VII (F7) of Mus musculus (Mouse).